The chain runs to 171 residues: Probable deoxyuridine 5'-triphosphate nucleotidohydrolase (171 aa).

Belongs to the dCTP deaminase family. Archaeal dUTPase subfamily.

It carries out the reaction dUTP + H2O = dUMP + diphosphate + H(+). The protein operates within pyrimidine metabolism; dUMP biosynthesis; dUMP from dCTP (dUTP route): step 2/2. In terms of biological role, this enzyme is involved in nucleotide metabolism: it produces dUMP, the immediate precursor of thymidine nucleotides and it decreases the intracellular concentration of dUTP so that uracil cannot be incorporated into DNA. In Methanosarcina acetivorans (strain ATCC 35395 / DSM 2834 / JCM 12185 / C2A), this protein is Probable deoxyuridine 5'-triphosphate nucleotidohydrolase.